A 673-amino-acid polypeptide reads, in one-letter code: Metal-nicotianamine transporter YSL1 (673 aa).

The segment covering 1 to 13 (MEIEQRRIMKREG) has biased composition (basic and acidic residues). A disordered region spans residues 1 to 39 (MEIEQRRIMKREGEEEEDNNQLSLQEEEPDTEEEMSGRT). The segment covering 14 to 34 (EEEEDNNQLSLQEEEPDTEEE) has biased composition (acidic residues). 16 helical membrane passes run 46–66 (QITV…SVIA), 71–91 (LTTG…FVFV), 119–139 (SAVA…LLGL), 163–183 (GLGW…FVLI), 225–245 (FMKY…FSGI), 260–280 (AWKQ…GMIC), 283–303 (LVNL…WPLL), 328–348 (VFLS…KILF), 392–412 (FAVS…PLIF), 420–440 (VIVA…GAGL), 442–462 (DINM…AVTG), 467–487 (VVAG…SCIL), 510–530 (IGTV…YKAF), 558–578 (FSAL…FAVL), 604–624 (FLVG…VFVW), and 642–662 (GLIC…LAGV).

Belongs to the YSL (TC 2.A.67.2) family. As to expression, low levels of expression in leaves and shoots, but not detected in roots. Restricted to the vasculature, in the xylem parenchyma surrounding xylem tubes. Expressed in pollen grains, in the vasculature of petals and sepals, in the carpel veins, in the style underneath the stigmatic papillae, in the vascular tissue of the funiculus and in the chalazal endosperm.

The protein localises to the membrane. In terms of biological role, involved in iron loading of the seeds. Acts probably as a transporter of iron- and metal-nicotianamine chelates. This chain is Metal-nicotianamine transporter YSL1 (YSL1), found in Arabidopsis thaliana (Mouse-ear cress).